The chain runs to 430 residues: Glutamate-1-semialdehyde 2,1-aminomutase (430 aa).

K265 bears the N6-(pyridoxal phosphate)lysine mark.

The protein belongs to the class-III pyridoxal-phosphate-dependent aminotransferase family. HemL subfamily. Homodimer. The cofactor is pyridoxal 5'-phosphate.

Its subcellular location is the cytoplasm. The enzyme catalyses (S)-4-amino-5-oxopentanoate = 5-aminolevulinate. It functions in the pathway porphyrin-containing compound metabolism; protoporphyrin-IX biosynthesis; 5-aminolevulinate from L-glutamyl-tRNA(Glu): step 2/2. This chain is Glutamate-1-semialdehyde 2,1-aminomutase, found in Helicobacter pylori (strain HPAG1).